Reading from the N-terminus, the 770-residue chain is Semaphorin-4F (770 aa).

The first 34 residues, 1–34, serve as a signal peptide directing secretion; that stretch reads MPASAARPRPGPGQPTASPFPLLLLAVLSGPVSG. Residues 35 to 659 are Extracellular-facing; sequence RVPRSVPRTS…RDAPSRAHTV (625 aa). Positions 42 to 510 constitute a Sema domain; the sequence is RTSLPISEAD…SRTEVTQVNT (469 aa). N64 carries N-linked (GlcNAc...) asparagine glycosylation. C112 and C122 form a disulfide bridge. Residue N133 is glycosylated (N-linked (GlcNAc...) asparagine). 3 disulfides stabilise this stretch: C140-C149, C273-C384, and C297-C343. The N-linked (GlcNAc...) asparagine glycan is linked to N509. The PSI domain maps to 512 to 563; that stretch reads NCGRLQSCSECILAQDPVCAWSFRLDECVAHAGEHRGLVQDIESADVSSLCP. 3 disulfides stabilise this stretch: C513–C530, C522–C539, and C587–C628. The Ig-like C2-type domain maps to 580 to 635; it reads AAHVVLPCSPSSAWASCVWHQPSGVTALTPRRDGLEVVVTPGAMGAYACECQEGGA. The chain crosses the membrane as a helical span at residues 660–680; sequence GAGLAGFFLGILAASLTLILI. Over 681-770 the chain is Cytoplasmic; it reads GRRQQRRRQR…PLATCDETSI (90 aa). Residues 696 to 725 are disordered; sequence DKVGLDLGAPPSGTTSYSQDPPSPSPEDER. A phosphoserine mark is found at S718 and S720. The PDZ-binding signature appears at 768–770; the sequence is TSI.

Belongs to the semaphorin family. Interacts (via PDZ-binding motif) with DLG4/SAP90 (via PDZ domain 2); this interaction may promote translocation of DLG4/SAP90 to the membrane.

The protein localises to the cell membrane. Its subcellular location is the postsynaptic density. It is found in the perikaryon. The protein resides in the cell projection. It localises to the dendrite. Its function is as follows. Probable cell surface receptor that regulates oligodendroglial precursor cell migration. Might also regulate differentiation of oligodendroglial precursor cells. Has growth cone collapse activity against retinal ganglion-cell axons. The sequence is that of Semaphorin-4F (SEMA4F) from Homo sapiens (Human).